Reading from the N-terminus, the 208-residue chain is Imidazole glycerol phosphate synthase subunit HisH (208 aa).

A Glutamine amidotransferase type-1 domain is found at 1–206; the sequence is MIVIIDYDTG…KEVIRSCKSS (206 aa). Residue C79 is the Nucleophile of the active site. Active-site residues include H181 and E183.

As to quaternary structure, heterodimer of HisH and HisF.

The protein localises to the cytoplasm. The catalysed reaction is 5-[(5-phospho-1-deoxy-D-ribulos-1-ylimino)methylamino]-1-(5-phospho-beta-D-ribosyl)imidazole-4-carboxamide + L-glutamine = D-erythro-1-(imidazol-4-yl)glycerol 3-phosphate + 5-amino-1-(5-phospho-beta-D-ribosyl)imidazole-4-carboxamide + L-glutamate + H(+). It catalyses the reaction L-glutamine + H2O = L-glutamate + NH4(+). It functions in the pathway amino-acid biosynthesis; L-histidine biosynthesis; L-histidine from 5-phospho-alpha-D-ribose 1-diphosphate: step 5/9. Its function is as follows. IGPS catalyzes the conversion of PRFAR and glutamine to IGP, AICAR and glutamate. The HisH subunit catalyzes the hydrolysis of glutamine to glutamate and ammonia as part of the synthesis of IGP and AICAR. The resulting ammonia molecule is channeled to the active site of HisF. This Listeria welshimeri serovar 6b (strain ATCC 35897 / DSM 20650 / CCUG 15529 / CIP 8149 / NCTC 11857 / SLCC 5334 / V8) protein is Imidazole glycerol phosphate synthase subunit HisH.